A 231-amino-acid chain; its full sequence is Small ribosomal subunit protein uS2 (231 aa).

It belongs to the universal ribosomal protein uS2 family.

The protein is Small ribosomal subunit protein uS2 of Blochmanniella floridana.